A 416-amino-acid chain; its full sequence is Ribulose bisphosphate carboxylase large chain (416 aa).

N6,N6,N6-trimethyllysine is present on Lys5. Positions 114 and 164 each coordinate substrate. Residue Lys166 is the Proton acceptor of the active site. Lys168 serves as a coordination point for substrate. Mg(2+) is bound by residues Lys192, Asp194, and Glu195. Residue Lys192 is modified to N6-carboxylysine. His285 serves as the catalytic Proton acceptor. Substrate-binding residues include Arg286, His318, and Ser370.

Belongs to the RuBisCO large chain family. Type I subfamily. As to quaternary structure, heterohexadecamer of 8 large chains and 8 small chains; disulfide-linked. The disulfide link is formed within the large subunit homodimers. It depends on Mg(2+) as a cofactor. Post-translationally, the disulfide bond which can form in the large chain dimeric partners within the hexadecamer appears to be associated with oxidative stress and protein turnover.

It is found in the plastid. Its subcellular location is the chloroplast. The catalysed reaction is 2 (2R)-3-phosphoglycerate + 2 H(+) = D-ribulose 1,5-bisphosphate + CO2 + H2O. The enzyme catalyses D-ribulose 1,5-bisphosphate + O2 = 2-phosphoglycolate + (2R)-3-phosphoglycerate + 2 H(+). Functionally, ruBisCO catalyzes two reactions: the carboxylation of D-ribulose 1,5-bisphosphate, the primary event in carbon dioxide fixation, as well as the oxidative fragmentation of the pentose substrate in the photorespiration process. Both reactions occur simultaneously and in competition at the same active site. The sequence is that of Ribulose bisphosphate carboxylase large chain (rbcL) from Spigelia marilandica (Woodland pinkroot).